A 332-amino-acid chain; its full sequence is DNA-directed RNA polymerase subunit alpha (332 aa).

Residues 1-234 (MTVTISQVLR…DQLSVFGDFT (234 aa)) form an alpha N-terminal domain (alpha-NTD) region. The interval 248-332 (VDPVLLRPID…PGVSQYGMLG (85 aa)) is alpha C-terminal domain (alpha-CTD).

It belongs to the RNA polymerase alpha chain family. In terms of assembly, homodimer. The RNAP catalytic core consists of 2 alpha, 1 beta, 1 beta' and 1 omega subunit. When a sigma factor is associated with the core the holoenzyme is formed, which can initiate transcription.

It carries out the reaction RNA(n) + a ribonucleoside 5'-triphosphate = RNA(n+1) + diphosphate. Its function is as follows. DNA-dependent RNA polymerase catalyzes the transcription of DNA into RNA using the four ribonucleoside triphosphates as substrates. The polypeptide is DNA-directed RNA polymerase subunit alpha (Xylella fastidiosa (strain M12)).